Here is a 353-residue protein sequence, read N- to C-terminus: G-protein coupled estrogen receptor 1 (353 aa).

Residues 1–40 are Extracellular-facing; that stretch reads MEEQTTNVIQIYVNGTEQFNASFDFNITDVKESTDTYEFY. The chain crosses the membrane as a helical span at residues 41–61; the sequence is IIGLFLSCLYTIFLFPIGFIG. Over 62–81 the chain is Cytoplasmic; sequence NILILVVNLNHRERMTIPDL. Residues 82 to 102 traverse the membrane as a helical segment; the sequence is YFVNLAVADLILVADSLIEVF. Over 103–112 the chain is Extracellular; sequence NLNEKYYDYA. The helical transmembrane segment at 113–133 threads the bilayer; sequence VLCTFMSLFLQVNMYSSIFFL. An intrachain disulfide couples Cys-115 to Cys-192. Residues 134–160 are Cytoplasmic-facing; the sequence is TWMSFDRYVALTSSMSSSPLRTMQHAK. The chain crosses the membrane as a helical span at residues 161–181; sequence LSCSLIWMASILATLLPFTIV. The Extracellular segment spans residues 182-202; sequence QTQHTGEVHFCFANVFEIQWL. A helical transmembrane segment spans residues 203–223; that stretch reads EVTIGFLIPFSIIGLCYSLIV. The Cytoplasmic segment spans residues 224-245; it reads RTLMRAQKHKGLWPRRQKALRM. Residues 246–266 traverse the membrane as a helical segment; that stretch reads IVVVVLVFFICWLPENVFISI. Over 267 to 292 the chain is Extracellular; the sequence is QLLQGTADPSKRTDTTLWHDYPLTGH. The helical transmembrane segment at 293–313 threads the bilayer; the sequence is IVNLAAFSNSCLNPIIYSFLG. Residues 314–353 lie on the Cytoplasmic side of the membrane; that stretch reads ETFRDKLRLFIKRKASWSVVYRFCNHTLDLQIPVRSESEV.

The protein belongs to the G-protein coupled receptor 1 family. As to quaternary structure, homodimer. Heterodimer. Expressed in brain regions that are known to control reproduction and sex behavior. Expressed in ovary, muscle and intestine. Expressed in early germ cells of the testis, including the spermatogonia, spermatocytes, and somatic cells such as Sertoli cells.

It localises to the nucleus. The protein resides in the cytoplasm. Its subcellular location is the perinuclear region. It is found in the cytoskeleton. The protein localises to the cytoplasmic vesicle membrane. It localises to the cell membrane. The protein resides in the basolateral cell membrane. Its subcellular location is the endoplasmic reticulum membrane. It is found in the early endosome. The protein localises to the recycling endosome. It localises to the golgi apparatus. The protein resides in the trans-Golgi network. Its subcellular location is the golgi apparatus membrane. It is found in the cell projection. The protein localises to the dendrite. It localises to the dendritic spine membrane. The protein resides in the axon. Its subcellular location is the postsynaptic density. It is found in the mitochondrion membrane. Membrane G-protein coupled estrogen receptor that binds to 17-beta-estradiol (E2) with high affinity, leading to rapid and transient activation of numerous intracellular signaling pathways. Plays a role in the embryonic development of sensory and motor neurons. Specifically induces apoptosis and reduces proliferation of brain cells. Involved in maintenance of meiotic arrest in oocytes. The chain is G-protein coupled estrogen receptor 1 (gper1) from Danio rerio (Zebrafish).